We begin with the raw amino-acid sequence, 148 residues long: Single-stranded DNA-binding protein 2 (148 aa).

The region spanning 4–109 (INSVIIAGNL…IKARRIQFLN (106 aa)) is the SSB domain.

In terms of assembly, homotetramer.

The polypeptide is Single-stranded DNA-binding protein 2 (ssb2) (Chlorobaculum tepidum (strain ATCC 49652 / DSM 12025 / NBRC 103806 / TLS) (Chlorobium tepidum)).